A 704-amino-acid polypeptide reads, in one-letter code: Acetate--CoA ligase [ADP-forming] (704 aa).

The protein in the N-terminal section; belongs to the acetate CoA ligase alpha subunit family. This sequence in the C-terminal section; belongs to the acetate CoA ligase beta subunit family. In terms of assembly, homodimer.

It carries out the reaction acetate + ATP + CoA = acetyl-CoA + ADP + phosphate. In terms of biological role, catalyzes the formation of acetate and ATP from acetyl-CoA by using ADP and phosphate. Can also use butyryl-CoA, but not phenylacetyl-CoA. Cannot catalyze the reverse reaction. The chain is Acetate--CoA ligase [ADP-forming] from Methanocaldococcus jannaschii (strain ATCC 43067 / DSM 2661 / JAL-1 / JCM 10045 / NBRC 100440) (Methanococcus jannaschii).